The chain runs to 858 residues: Leucine--tRNA ligase (858 aa).

The short motif at 43-54 is the 'HIGH' region element; the sequence is PYPSGDGLHVGH. A 'KMSKS' region motif is present at residues 629–633; that stretch reads KMSKS. Lys632 is a binding site for ATP.

This sequence belongs to the class-I aminoacyl-tRNA synthetase family.

It is found in the cytoplasm. The enzyme catalyses tRNA(Leu) + L-leucine + ATP = L-leucyl-tRNA(Leu) + AMP + diphosphate. In Treponema denticola (strain ATCC 35405 / DSM 14222 / CIP 103919 / JCM 8153 / KCTC 15104), this protein is Leucine--tRNA ligase.